The following is a 447-amino-acid chain: Drebrin-like protein A (447 aa).

One can recognise an ADF-H domain in the interval 2-133 (SVNLSKNGAA…EPESIMEKVA (132 aa)). 2 disordered regions span residues 141–160 (NFHKESKRGNEGPQGPVGSV) and 184–368 (KDEE…TENQ). Residues 180–245 (AKAEKDEEER…EQEETEKQQT (66 aa)) are a coiled coil. A compositionally biased stretch (basic and acidic residues) spans 184–242 (KDEEERRMEENRRANSEKDRLERERKEREQREAETREQRFRERAKEIDAQRKEQEETEK). Residues 246-255 (VPASQRSVNP) show a composition bias toward polar residues. The segment covering 319 to 328 (PESPVPPVSH) has biased composition (pro residues). Positions 345–365 (QEEENIYQDATEDQNIYEDTT) are enriched in acidic residues. Residues 388–447 (EKGVCARALYDYQAADDTEISFDPDDLITQIQFIDEGWWRGFSPAGHFGMFPANYVELLE) form the SH3 domain.

This sequence belongs to the ABP1 family.

Its subcellular location is the cytoplasm. It is found in the cytoskeleton. The protein localises to the cell projection. The protein resides in the lamellipodium. It localises to the ruffle. Its subcellular location is the cell cortex. It is found in the cytosol. The protein localises to the synapse. The protein resides in the perikaryon. It localises to the neuron projection. Its subcellular location is the cell membrane. It is found in the cytoplasmic vesicle. The protein localises to the clathrin-coated vesicle membrane. The protein resides in the golgi apparatus membrane. It localises to the podosome. Its subcellular location is the early endosome. It is found in the dendrite. The protein localises to the postsynaptic density. In terms of biological role, adapter protein that binds F-actin and dynamin, and thereby plays a role in receptor-mediated endocytosis. Plays a role in the reorganization of the actin cytoskeleton, formation of cell projections, such as neurites, in neuron morphogenesis and synapse formation. Does not bind G-actin and promote actin polymerization by itself, but excerts its functions by interaction with other proteins. Required for the formation of organized podosome rosettes. The polypeptide is Drebrin-like protein A (dbnl-a) (Xenopus laevis (African clawed frog)).